Here is a 313-residue protein sequence, read N- to C-terminus: tRNA uridine(34) hydroxylase (313 aa).

One can recognise a Rhodanese domain in the interval 124–218 (SDPEVLLIDT…YLEEVPQEET (95 aa)). Cys178 acts as the Cysteine persulfide intermediate in catalysis.

It belongs to the TrhO family.

It carries out the reaction uridine(34) in tRNA + AH2 + O2 = 5-hydroxyuridine(34) in tRNA + A + H2O. Functionally, catalyzes oxygen-dependent 5-hydroxyuridine (ho5U) modification at position 34 in tRNAs. This Pseudomonas fluorescens (strain SBW25) protein is tRNA uridine(34) hydroxylase.